Reading from the N-terminus, the 516-residue chain is Flavonoid 3',5'-hydroxylase (516 aa).

Cys453 lines the heme pocket.

This sequence belongs to the cytochrome P450 family. Heme is required as a cofactor.

It catalyses the reaction a 3',5'-unsubstituted flavanone + 2 reduced [NADPH--hemoprotein reductase] + 2 O2 = a 3',5'-dihydroxyflavanone + 2 oxidized [NADPH--hemoprotein reductase] + 2 H2O + 2 H(+). Its pathway is pigment biosynthesis; anthocyanin biosynthesis. Its function is as follows. Catalyzes the 3'5'-hydroxylation of naringenin and eriodictyol to form 5,7,3,'4',5'-pentahydroxyflavanone and 3',5'-hydroxylation of dihydrokaempferol and dihydroquercetin to form dihydromyricetin. The protein is Flavonoid 3',5'-hydroxylase (CYP75A4) of Gentiana triflora (Clustered gentian).